The chain runs to 757 residues: RNA exonuclease 3 (757 aa).

Disordered regions lie at residues 56–259 (VKRE…AEHL) and 474–590 (ESLD…CDQA). Over residues 120–132 (EGGRAEGAEKKEF) the composition is skewed to basic and acidic residues. 3 stretches are compositionally biased toward polar residues: residues 145 to 172 (TPHASATPQASVSPQTSAPPQHVSSSVS), 202 to 223 (QPSSSREPPVSSIDTRTSSSPK), and 230 to 240 (MTTSASPSQSR). Low complexity-rich tracts occupy residues 244-253 (RNTSASPSSS) and 474-502 (ESLDTSTSTSTSTSATTSAPSAKSTKTAS). Over residues 503-516 (RPASTPTKSLTSSL) the composition is skewed to polar residues. Basic and acidic residues-rich tracts occupy residues 543–557 (REPDITLETMKRGIG) and 565–581 (SQERSSEPRERSARVRE). The region spanning 597 to 751 (VVAVDCEMLY…EDALAALDVV (155 aa)) is the Exonuclease domain.

The protein belongs to the REXO1/REXO3 family.

The protein resides in the cytoplasm. It is found in the nucleus. 3' to 5' exoribonuclease required for proper 3' end maturation of MRP RNA and of the U5L snRNA. In Yarrowia lipolytica (strain CLIB 122 / E 150) (Yeast), this protein is RNA exonuclease 3 (REX3).